The following is a 193-amino-acid chain: Holliday junction branch migration complex subunit RuvA (193 aa).

The interval 1 to 64 (MIGRIAGTLI…EDAHLLYGFG (64 aa)) is domain I. Positions 65 to 143 (TAAERETFRQ…ADLGTVPGGP (79 aa)) are domain II. The flexible linker stretch occupies residues 144-151 (AVSDDAVD). Residues 151–193 (DVLNALLALGYSDKEAALAIKQVPAGTGVSEGIKLALKALSKG) are domain III.

It belongs to the RuvA family. In terms of assembly, homotetramer. Forms an RuvA(8)-RuvB(12)-Holliday junction (HJ) complex. HJ DNA is sandwiched between 2 RuvA tetramers; dsDNA enters through RuvA and exits via RuvB. An RuvB hexamer assembles on each DNA strand where it exits the tetramer. Each RuvB hexamer is contacted by two RuvA subunits (via domain III) on 2 adjacent RuvB subunits; this complex drives branch migration. In the full resolvosome a probable DNA-RuvA(4)-RuvB(12)-RuvC(2) complex forms which resolves the HJ.

Its subcellular location is the cytoplasm. In terms of biological role, the RuvA-RuvB-RuvC complex processes Holliday junction (HJ) DNA during genetic recombination and DNA repair, while the RuvA-RuvB complex plays an important role in the rescue of blocked DNA replication forks via replication fork reversal (RFR). RuvA specifically binds to HJ cruciform DNA, conferring on it an open structure. The RuvB hexamer acts as an ATP-dependent pump, pulling dsDNA into and through the RuvAB complex. HJ branch migration allows RuvC to scan DNA until it finds its consensus sequence, where it cleaves and resolves the cruciform DNA. In Ralstonia pickettii (strain 12J), this protein is Holliday junction branch migration complex subunit RuvA.